The sequence spans 414 residues: Dihydroorotase (414 aa).

Zn(2+)-binding residues include His-56 and His-58. Substrate-binding positions include 58–60 (HFR) and Asn-90. Residues Lys-138, His-171, His-219, and Asp-280 each contribute to the Zn(2+) site. Residue Lys-138 is modified to N6-carboxylysine. Asp-280 is a catalytic residue. His-284 contacts substrate.

This sequence belongs to the metallo-dependent hydrolases superfamily. DHOase family. Class I DHOase subfamily. Zn(2+) serves as cofactor.

The catalysed reaction is (S)-dihydroorotate + H2O = N-carbamoyl-L-aspartate + H(+). Its pathway is pyrimidine metabolism; UMP biosynthesis via de novo pathway; (S)-dihydroorotate from bicarbonate: step 3/3. Catalyzes the reversible cyclization of carbamoyl aspartate to dihydroorotate. The polypeptide is Dihydroorotase (Thermoplasma acidophilum (strain ATCC 25905 / DSM 1728 / JCM 9062 / NBRC 15155 / AMRC-C165)).